Consider the following 486-residue polypeptide: Cardiolipin synthase A (486 aa).

Transmembrane regions (helical) follow at residues 3–23 (TFYT…IAGV) and 38–58 (MAWL…YLSV). PLD phosphodiesterase domains lie at 219–246 (MDLR…VDPR) and 399–426 (EGGL…DMRS). Active-site residues include histidine 224, lysine 226, aspartate 231, histidine 404, lysine 406, and aspartate 411.

It belongs to the phospholipase D family. Cardiolipin synthase subfamily. ClsA sub-subfamily.

The protein localises to the cell inner membrane. The catalysed reaction is 2 a 1,2-diacyl-sn-glycero-3-phospho-(1'-sn-glycerol) = a cardiolipin + glycerol. In terms of biological role, catalyzes the reversible phosphatidyl group transfer from one phosphatidylglycerol molecule to another to form cardiolipin (CL) (diphosphatidylglycerol) and glycerol. This chain is Cardiolipin synthase A, found in Salmonella paratyphi A (strain ATCC 9150 / SARB42).